A 484-amino-acid chain; its full sequence is Cobyric acid synthase (484 aa).

Residues 251–438 (ALKIAVPMLP…LHGLFGSDAY (188 aa)) form the GATase cobBQ-type domain. Catalysis depends on cysteine 333, which acts as the Nucleophile. The active site involves histidine 430.

Belongs to the CobB/CobQ family. CobQ subfamily.

It functions in the pathway cofactor biosynthesis; adenosylcobalamin biosynthesis. Catalyzes amidations at positions B, D, E, and G on adenosylcobyrinic A,C-diamide. NH(2) groups are provided by glutamine, and one molecule of ATP is hydrogenolyzed for each amidation. This Rhizobium etli (strain ATCC 51251 / DSM 11541 / JCM 21823 / NBRC 15573 / CFN 42) protein is Cobyric acid synthase.